We begin with the raw amino-acid sequence, 77 residues long: U8-hexatoxin-Mg1a (77 aa).

Residues 1–22 form the signal peptide; sequence MKVFSFTIGLVVIISLFAFALA. Positions 23–43 are excised as a propeptide; that stretch reads YDEETDLMKKLVEMERAIEQR. Intrachain disulfides connect cysteine 46–cysteine 60, cysteine 53–cysteine 65, and cysteine 59–cysteine 76.

Expressed by the venom gland.

Its subcellular location is the secreted. In terms of biological role, intrathorax injection into crickets causes paralysis prolonged for more than 60 minutes, followed by recovery. The chain is U8-hexatoxin-Mg1a from Macrothele gigas (Japanese funnel web spider).